Reading from the N-terminus, the 179-residue chain is Auxin-responsive protein IAA15 (179 aa).

Residues 21–25 (LTLAL) carry the EAR-like (transcriptional repression) motif. Residues 86–173 (RKYVKVALDG…SCKRMRLMKT (88 aa)) enclose the PB1 domain.

This sequence belongs to the Aux/IAA family. As to quaternary structure, homodimers and heterodimers.

The protein resides in the nucleus. Aux/IAA proteins are short-lived transcriptional factors that function as repressors of early auxin response genes at low auxin concentrations. Repression is thought to result from the interaction with auxin response factors (ARFs), proteins that bind to the auxin-responsive promoter element (AuxRE). Formation of heterodimers with ARF proteins may alter their ability to modulate early auxin response genes expression. The chain is Auxin-responsive protein IAA15 (IAA15) from Arabidopsis thaliana (Mouse-ear cress).